Reading from the N-terminus, the 64-residue chain is Large ribosomal subunit protein bL35 (64 aa).

Belongs to the bacterial ribosomal protein bL35 family.

This is Large ribosomal subunit protein bL35 from Acinetobacter baumannii (strain AB307-0294).